The following is a 358-amino-acid chain: Peptide chain release factor 1 (358 aa).

Gln233 carries the N5-methylglutamine modification.

It belongs to the prokaryotic/mitochondrial release factor family. In terms of processing, methylated by PrmC. Methylation increases the termination efficiency of RF1.

It localises to the cytoplasm. In terms of biological role, peptide chain release factor 1 directs the termination of translation in response to the peptide chain termination codons UAG and UAA. The protein is Peptide chain release factor 1 of Flavobacterium johnsoniae (strain ATCC 17061 / DSM 2064 / JCM 8514 / BCRC 14874 / CCUG 350202 / NBRC 14942 / NCIMB 11054 / UW101) (Cytophaga johnsonae).